Consider the following 93-residue polypeptide: Pyrimidine/purine nucleoside phosphorylase (93 aa).

Belongs to the nucleoside phosphorylase PpnP family.

It catalyses the reaction a purine D-ribonucleoside + phosphate = a purine nucleobase + alpha-D-ribose 1-phosphate. It carries out the reaction adenosine + phosphate = alpha-D-ribose 1-phosphate + adenine. The catalysed reaction is cytidine + phosphate = cytosine + alpha-D-ribose 1-phosphate. The enzyme catalyses guanosine + phosphate = alpha-D-ribose 1-phosphate + guanine. It catalyses the reaction inosine + phosphate = alpha-D-ribose 1-phosphate + hypoxanthine. It carries out the reaction thymidine + phosphate = 2-deoxy-alpha-D-ribose 1-phosphate + thymine. The catalysed reaction is uridine + phosphate = alpha-D-ribose 1-phosphate + uracil. The enzyme catalyses xanthosine + phosphate = alpha-D-ribose 1-phosphate + xanthine. Functionally, catalyzes the phosphorolysis of diverse nucleosides, yielding D-ribose 1-phosphate and the respective free bases. Can use uridine, adenosine, guanosine, cytidine, thymidine, inosine and xanthosine as substrates. Also catalyzes the reverse reactions. The polypeptide is Pyrimidine/purine nucleoside phosphorylase (Pseudomonas aeruginosa (strain LESB58)).